The following is a 420-amino-acid chain: Gamma-glutamyl phosphate reductase (420 aa).

The protein belongs to the gamma-glutamyl phosphate reductase family.

The protein localises to the cytoplasm. It carries out the reaction L-glutamate 5-semialdehyde + phosphate + NADP(+) = L-glutamyl 5-phosphate + NADPH + H(+). Its pathway is amino-acid biosynthesis; L-proline biosynthesis; L-glutamate 5-semialdehyde from L-glutamate: step 2/2. In terms of biological role, catalyzes the NADPH-dependent reduction of L-glutamate 5-phosphate into L-glutamate 5-semialdehyde and phosphate. The product spontaneously undergoes cyclization to form 1-pyrroline-5-carboxylate. The protein is Gamma-glutamyl phosphate reductase of Streptococcus pneumoniae serotype 4 (strain ATCC BAA-334 / TIGR4).